Here is a 280-residue protein sequence, read N- to C-terminus: Fructose-1,6-bisphosphatase class 1 (280 aa).

Mg(2+) is bound by residues Glu-64, Asp-83, Leu-85, and Asp-86. Substrate is bound by residues 86–89, Tyr-189, and Lys-220; that span reads DGSS. Glu-226 contacts Mg(2+).

This sequence belongs to the FBPase class 1 family. As to quaternary structure, homotetramer. Mg(2+) is required as a cofactor.

The protein localises to the cytoplasm. The enzyme catalyses beta-D-fructose 1,6-bisphosphate + H2O = beta-D-fructose 6-phosphate + phosphate. It participates in carbohydrate biosynthesis; gluconeogenesis. The chain is Fructose-1,6-bisphosphatase class 1 from Campylobacter jejuni (strain RM1221).